Here is a 1182-residue protein sequence, read N- to C-terminus: Myosin IC heavy chain (1182 aa).

In terms of domain architecture, Myosin motor spans 15–698 (EGLDDMTLLS…MLFSLEETRE (684 aa)). Position 109–116 (109–116 (GESGAGKT)) interacts with ATP. The segment at 571 to 593 (AAELVATLMKSTPHYIRTIKPND) is actin-binding. A TH1 domain is found at 774–957 (RNRFSMISVR…QFHIASGLPA (184 aa)). Disordered regions lie at residues 999–1052 (KPAP…PAPG) and 1064–1103 (SKPL…PAGQ). Residues 1013 to 1042 (KKPAPTAPGGAPMMKKPAPAPGGAPMMKKP) show a composition bias toward low complexity. Residues 1081–1092 (PTAPGGPAPAGA) are compositionally biased toward pro residues. The SH3 domain maps to 1123–1182 (PPPQQYIALYEYDAMQPDELTFKENDVINLIKKVDADWWQGELVRTKQIGMLPSNYVQQI).

The protein belongs to the TRAFAC class myosin-kinesin ATPase superfamily. Myosin family. Myosin I heavy chain is single-headed. Dimer of a heavy and a light chain. Inability to self-assemble into filaments.

The protein resides in the cell projection. It localises to the lamellipodium. Functionally, myosin is a protein that binds to actin and has ATPase activity that is activated by actin. Involved in the process of phagocytosis and appears to support streaming behavior. The chain is Myosin IC heavy chain (myoC) from Dictyostelium discoideum (Social amoeba).